A 295-amino-acid chain; its full sequence is Thioredoxin-related transmembrane protein 2 (295 aa).

The signal sequence occupies residues 1-48 (MAVLAPLIALVYSVPRLSRWLARPYCLLSALLSIAFLLVRKLPPICNG). The Extracellular segment spans residues 49-102 (LPTQREDGNPCDFDWREVEILMFLSAIVMMKNRRSITVEQHVGNIFMFSKVANA). The helical transmembrane segment at 103-125 (ILFFRLDIRMGLLYLTLCIVFLM) threads the bilayer. The Thioredoxin domain maps to 114-269 (LLYLTLCIVF…LYQRAKKHSK (156 aa)). At 126–295 (TCKPPLYMGP…VPDGENKKDK (170 aa)) the chain is on the cytoplasmic side. Phosphoserine occurs at positions 211 and 243. A disordered region spans residues 266 to 295 (KHSKGGDMSEEKPVDPAPTTVPDGENKKDK). Residues 269–279 (KGGDMSEEKPV) are compositionally biased toward basic and acidic residues. Positions 292 to 295 (KKDK) match the Di-lysine motif motif.

As to quaternary structure, monomer. Homodimer; disulfide-linked. Occurs in both reduced and oxidized monomeric form. Oxidative conditions increase homodimerization. Interacts with CANX. Interacts with ATP2A2.

Its subcellular location is the endoplasmic reticulum membrane. The protein localises to the mitochondrion membrane. Endoplasmic reticulum and mitochondria-associated protein that probably functions as a regulator of cellular redox state and thereby regulates protein post-translational modification, protein folding and mitochondrial activity. Indirectly regulates neuronal proliferation, migration, and organization in the developing brain. The protein is Thioredoxin-related transmembrane protein 2 (Tmx2) of Mus musculus (Mouse).